A 327-amino-acid chain; its full sequence is tRNA N6-adenosine threonylcarbamoyltransferase (327 aa).

The Fe cation site is built by H109 and H113. Substrate contacts are provided by residues 132 to 136 (MVSGG), D165, G178, D182, and N268. A Fe cation-binding site is contributed by D296.

This sequence belongs to the KAE1 / TsaD family. Fe(2+) is required as a cofactor.

The protein localises to the cytoplasm. It catalyses the reaction L-threonylcarbamoyladenylate + adenosine(37) in tRNA = N(6)-L-threonylcarbamoyladenosine(37) in tRNA + AMP + H(+). Required for the formation of a threonylcarbamoyl group on adenosine at position 37 (t(6)A37) in tRNAs that read codons beginning with adenine. Is involved in the transfer of the threonylcarbamoyl moiety of threonylcarbamoyl-AMP (TC-AMP) to the N6 group of A37, together with TsaE and TsaB. TsaD likely plays a direct catalytic role in this reaction. This is tRNA N6-adenosine threonylcarbamoyltransferase from Thermotoga neapolitana (strain ATCC 49049 / DSM 4359 / NBRC 107923 / NS-E).